Reading from the N-terminus, the 608-residue chain is Protein UL27 (608 aa).

Residues 1-13 (MNPVDQPPPPPLT) show a composition bias toward pro residues. Residues 1-33 (MNPVDQPPPPPLTQQPEEQAKEDHDDGDERLFR) form a disordered region. The segment covering 18-33 (EQAKEDHDDGDERLFR) has biased composition (basic and acidic residues).

Belongs to the herpesviridae U4 family. Interacts with host KAT5, PSME3 and EP400.

Its subcellular location is the host nucleus. It is found in the host nucleolus. In terms of biological role, promotes a cell cycle arrest in G0/G1 by inducing the proteasomal degradation of host histone acetyltransferase KAT5/Tip60. This chain is Protein UL27 (UL27), found in Homo sapiens (Human).